We begin with the raw amino-acid sequence, 366 residues long: Zinc finger protein ubi-d4 B (366 aa).

2 disordered regions span residues 41-94 (ASAP…DGSS) and 140-167 (DDLD…IGGA). The span at 76–86 (PDPEQMLKKEG) shows a compositional bias: basic and acidic residues. Over residues 140-149 (DDLDDEDYEE) the composition is skewed to acidic residues. The segment at 183-206 (YACDICGKRYKNRPGLSYHYAHSH) adopts a C2H2-type zinc-finger fold. The segment at 211–243 (EGAGAEDKEDSQPPTPIMHRSEEQKSKKGPDGL) is disordered. Basic and acidic residues predominate over residues 229–240 (HRSEEQKSKKGP). 2 consecutive PHD-type zinc fingers follow at residues 247 to 307 (NNYC…CKCC) and 304 to 354 (CKCC…CLDL).

The protein belongs to the requiem/DPF family.

It localises to the cytoplasm. The protein resides in the nucleus. In terms of biological role, may be a transcription factor required for the apoptosis response following survival factor withdrawal from myeloid cells. Might also have a role in the development and maturation of lymphoid cells. This chain is Zinc finger protein ubi-d4 B (req-b), found in Xenopus laevis (African clawed frog).